The chain runs to 513 residues: Sphingolipid C9-methyltransferase (513 aa).

The next 2 membrane-spanning stretches (helical) occupy residues 52–72 (ILFS…GLGF) and 74–94 (TWVF…WSIM). S-adenosyl-L-methionine-binding positions include 222–223 (YT), 259–267 (VLDIGCGWG), 285–290 (TLGRNQ), and 315–316 (YR).

This sequence belongs to the CFA/CMAS family.

Its subcellular location is the membrane. The catalysed reaction is a (4E,8E)-4-sphinga-4,8-dienine ceramide + S-adenosyl-L-methionine = a 9-methyl-(4E,8E)-sphinga-4,8-dienine ceramide + S-adenosyl-L-homocysteine + H(+). The protein operates within lipid metabolism; sphingolipid metabolism. In terms of biological role, catalyzes methylation of the sphingoid base component of glucosylceramides (GluCers) at the C9-position. Sphingolipid C9-methylation requires 4,8-desaturated ceramides as substrates. Glucosylceramides play important roles in growth, differentiation and pathogenicity. The methyl group at the C9-position distinguishes fungal glucosylceramides from those of plants and animals, and may thus play a role in host-pathogen interactions enabling the host to recognize the fungal attack and initiate specific defense responses. Not necessary for vegetative growth at low temperatures, but plays a role in hyphal formation on solid medium. This is Sphingolipid C9-methyltransferase from Candida albicans (strain SC5314 / ATCC MYA-2876) (Yeast).